Here is a 682-residue protein sequence, read N- to C-terminus: Potassium-transporting ATPase ATP-binding subunit (682 aa).

The next 5 helical transmembrane spans lie at 15–35 (AALF…AKLA), 42–62 (SPVM…TASG), 66–86 (AGFG…GNFA), 233–253 (LTFL…GVTL), and 257–277 (LLIA…LPAI). The 4-aspartylphosphate intermediate role is filled by D310. ATP is bound by residues D347, E351, 377 to 384 (FTAQTRMS), and K395. Positions 518 and 522 each coordinate Mg(2+). Helical transmembrane passes span 588-608 (FAIL…LNVM), 616-636 (AVLA…PLAL), and 662-682 (VLLP…VLGA).

It belongs to the cation transport ATPase (P-type) (TC 3.A.3) family. Type IA subfamily. In terms of assembly, the system is composed of three essential subunits: KdpA, KdpB and KdpC.

It localises to the cell inner membrane. The catalysed reaction is K(+)(out) + ATP + H2O = K(+)(in) + ADP + phosphate + H(+). Functionally, part of the high-affinity ATP-driven potassium transport (or Kdp) system, which catalyzes the hydrolysis of ATP coupled with the electrogenic transport of potassium into the cytoplasm. This subunit is responsible for energy coupling to the transport system and for the release of the potassium ions to the cytoplasm. In Xanthomonas axonopodis pv. citri (strain 306), this protein is Potassium-transporting ATPase ATP-binding subunit.